The following is a 444-amino-acid chain: Signal recognition particle 54 kDa protein (444 aa).

GTP-binding positions include 106–113, 187–191, and 245–248; these read GLQGSGKT, DTAGR, and SKLD.

The protein belongs to the GTP-binding SRP family. SRP54 subfamily. In terms of assembly, part of the signal recognition particle protein translocation system, which is composed of SRP and FtsY. Archaeal SRP consists of a 7S RNA molecule of 300 nucleotides and two protein subunits: SRP54 and SRP19.

It is found in the cytoplasm. The catalysed reaction is GTP + H2O = GDP + phosphate + H(+). Functionally, involved in targeting and insertion of nascent membrane proteins into the cytoplasmic membrane. Binds to the hydrophobic signal sequence of the ribosome-nascent chain (RNC) as it emerges from the ribosomes. The SRP-RNC complex is then targeted to the cytoplasmic membrane where it interacts with the SRP receptor FtsY. This is Signal recognition particle 54 kDa protein from Methanosphaera stadtmanae (strain ATCC 43021 / DSM 3091 / JCM 11832 / MCB-3).